Consider the following 112-residue polypeptide: Photosystem II reaction center Psb28 protein (112 aa).

Belongs to the Psb28 family. As to quaternary structure, part of the photosystem II complex.

Its subcellular location is the plastid. It is found in the cyanelle thylakoid membrane. In Cyanophora paradoxa, this protein is Photosystem II reaction center Psb28 protein.